Here is a 313-residue protein sequence, read N- to C-terminus: Interferon-inducible double-stranded RNA-dependent protein kinase activator A (313 aa).

Positions Met1–Phe21 are disordered. 3 sufficient for self-association and interaction with TARBP2 regions span residues Met1–Ala103, Asn102–Ile195, and Ile195–Lys313. Ser18 carries the phosphoserine modification. DRBM domains lie at Thr34–Ala101, Asn126–Asn194, and Asp240–Ile308. 3 positions are modified to phosphoserine: Ser167, Ser246, and Ser287.

The protein belongs to the PRKRA family. Homodimer. Interacts with EIF2AK2/PKR through its DRBM domains. Interacts with DICER1, AGO2 and TARBP2. Also able to interact with dsRNA. Interacts with UBC9. Forms a complex with UBC9 and p53/TP53. Interacts with DUS2L (via DRBM domain). In terms of processing, phosphorylated at Ser-246 in unstressed cells and at Ser-287 in stressed cells. Phosphorylation at Ser-246 appears to be a prerequisite for subsequent phosphorylation at Ser-287. Phosphorylation at Ser-246 and Ser-287 are necessary for activation of EIF2AK2/PKR under conditions of stress.

The protein localises to the cytoplasm. The protein resides in the perinuclear region. In terms of biological role, activates EIF2AK2/PKR in the absence of double-stranded RNA (dsRNA), leading to phosphorylation of EIF2S1/EFI2-alpha and inhibition of translation and induction of apoptosis. Required for siRNA production by DICER1 and for subsequent siRNA-mediated post-transcriptional gene silencing. Does not seem to be required for processing of pre-miRNA to miRNA by DICER1. Promotes UBC9-p53/TP53 association and sumoylation and phosphorylation of p53/TP53 at 'Lys-386' at 'Ser-392' respectively and enhances its activity in a EIF2AK2/PKR-dependent manner. This is Interferon-inducible double-stranded RNA-dependent protein kinase activator A (PRKRA) from Bos taurus (Bovine).